A 586-amino-acid chain; its full sequence is 25S rRNA (adenine-N(1))-methyltransferase (586 aa).

2 disordered regions span residues Gly23 to Leu229 and Gly536 to Asp573. Residues Ala25–Lys41 show a composition bias toward low complexity. Positions Leu65–Lys83 are enriched in basic and acidic residues. Residues Lys99–Asn108 show a composition bias toward polar residues. Residues Asn114–Asn123 show a composition bias toward basic residues. Residues Gly144 to Glu163 show a composition bias toward acidic residues. Residues Asp164–Gln182 show a composition bias toward basic and acidic residues. Residues Gln183 to Lys192 are compositionally biased toward low complexity. The segment covering Asn204–Asp213 has biased composition (polar residues). The span at Pro217–Leu229 shows a compositional bias: low complexity. Over residues Val539–Lys549 the composition is skewed to basic and acidic residues. Basic residues predominate over residues Asn550 to Pro559.

This sequence belongs to the methyltransferase superfamily. RRP8 family.

Its subcellular location is the nucleus. The protein localises to the nucleolus. In terms of biological role, S-adenosyl-L-methionine-dependent methyltransferase that specifically methylates the N(1) position of a conserved adenine in helix 25.1 in 25S rRNA. Required both for ribosomal 40S and 60S subunits biogenesis. Required for efficient pre-rRNA cleavage at site A2. The chain is 25S rRNA (adenine-N(1))-methyltransferase (RPR8) from Chaetomium thermophilum (strain DSM 1495 / CBS 144.50 / IMI 039719) (Thermochaetoides thermophila).